The sequence spans 202 residues: Probable GTP-binding protein EngB (202 aa).

Residues 22–197 (VFPEYAFIGR…LDYIENISKE (176 aa)) enclose the EngB-type G domain. GTP is bound by residues 30–37 (GRSNVGKS), 57–61 (GKTML), 75–78 (DLPG), 142–145 (TKAD), and 173–178 (YFISSS). Mg(2+) is bound by residues S37 and T59.

The protein belongs to the TRAFAC class TrmE-Era-EngA-EngB-Septin-like GTPase superfamily. EngB GTPase family. It depends on Mg(2+) as a cofactor.

In terms of biological role, necessary for normal cell division and for the maintenance of normal septation. The chain is Probable GTP-binding protein EngB from Bacteroides thetaiotaomicron (strain ATCC 29148 / DSM 2079 / JCM 5827 / CCUG 10774 / NCTC 10582 / VPI-5482 / E50).